A 182-amino-acid polypeptide reads, in one-letter code: Ribosome maturation factor RimM (182 aa).

The 78-residue stretch at Asp-99–Thr-176 folds into the PRC barrel domain.

It belongs to the RimM family. In terms of assembly, binds ribosomal protein uS19.

Its subcellular location is the cytoplasm. Functionally, an accessory protein needed during the final step in the assembly of 30S ribosomal subunit, possibly for assembly of the head region. Essential for efficient processing of 16S rRNA. May be needed both before and after RbfA during the maturation of 16S rRNA. It has affinity for free ribosomal 30S subunits but not for 70S ribosomes. This chain is Ribosome maturation factor RimM, found in Rhodopseudomonas palustris (strain HaA2).